Reading from the N-terminus, the 196-residue chain is Nucleoid occlusion factor SlmA (196 aa).

In terms of domain architecture, HTH tetR-type spans 7 to 68 (INRREEILQA…GLIEFIEESL (62 aa)). Positions 31-50 (TTAKLAKQVGVSEAALYRHF) form a DNA-binding region, H-T-H motif. Positions 110-139 (HALMFENERLRDRINQLFERIETSLRQILR) form a coiled coil.

Belongs to the nucleoid occlusion factor SlmA family. In terms of assembly, homodimer. Interacts with FtsZ.

It is found in the cytoplasm. The protein resides in the nucleoid. Required for nucleoid occlusion (NO) phenomenon, which prevents Z-ring formation and cell division over the nucleoid. Acts as a DNA-associated cell division inhibitor that binds simultaneously chromosomal DNA and FtsZ, and disrupts the assembly of FtsZ polymers. SlmA-DNA-binding sequences (SBS) are dispersed on non-Ter regions of the chromosome, preventing FtsZ polymerization at these regions. The polypeptide is Nucleoid occlusion factor SlmA (Vibrio cholerae serotype O1 (strain ATCC 39315 / El Tor Inaba N16961)).